The chain runs to 206 residues: Large ribosomal subunit protein uL4 (206 aa).

The disordered stretch occupies residues 43–78 (ARSGNRKQKDREEVHHTTKKPWRQKGTGRARAGMSS). Residues 49 to 58 (KQKDREEVHH) show a composition bias toward basic and acidic residues. Positions 59-70 (TTKKPWRQKGTG) are enriched in basic residues.

This sequence belongs to the universal ribosomal protein uL4 family. In terms of assembly, part of the 50S ribosomal subunit.

Functionally, one of the primary rRNA binding proteins, this protein initially binds near the 5'-end of the 23S rRNA. It is important during the early stages of 50S assembly. It makes multiple contacts with different domains of the 23S rRNA in the assembled 50S subunit and ribosome. Forms part of the polypeptide exit tunnel. The chain is Large ribosomal subunit protein uL4 from Herminiimonas arsenicoxydans.